The following is a 255-amino-acid chain: 5-oxoprolinase subunit A (255 aa).

This sequence belongs to the LamB/PxpA family. In terms of assembly, forms a complex composed of PxpA, PxpB and PxpC.

It catalyses the reaction 5-oxo-L-proline + ATP + 2 H2O = L-glutamate + ADP + phosphate + H(+). Catalyzes the cleavage of 5-oxoproline to form L-glutamate coupled to the hydrolysis of ATP to ADP and inorganic phosphate. This Thermococcus onnurineus (strain NA1) protein is 5-oxoprolinase subunit A.